The following is a 197-amino-acid chain: Cyclin-dependent kinase inhibitor 1B (197 aa).

Positions 1-11 (MSNVRVSNGSP) are enriched in polar residues. The interval 1 to 34 (MSNVRVSNGSPSLERMDARQAEHPKPSACRNLFG) is disordered. Serine 10 is subject to Phosphoserine; by UHMK1. The segment covering 14–25 (ERMDARQAEHPK) has biased composition (basic and acidic residues). The tract at residues 51-91 (DMEEASQRKWNFDFQNHKPLEGRYEWQEVERGSLPEFYYRP) is interaction with CDK2. Tyrosine 74 bears the Phosphotyrosine; by SRC mark. Positions 86–197 (EFYYRPPRPP…PKKPGLRRQT (112 aa)) are disordered. Tyrosine 88 bears the Phosphotyrosine; by ABL, LYN, SRC and JAK2 mark. Tyrosine 89 carries the post-translational modification Phosphotyrosine. Over residues 104–113 (QESQDVSGSR) the composition is skewed to polar residues. Positions 153–169 (KRPAAEDSSSQNKRANR) match the Nuclear localization signal motif. The residue at position 170 (threonine 170) is a Phosphothreonine; by CaMK1. A compositionally biased stretch (polar residues) spans 175-186 (SDGSPNAGTVEQ). Threonine 187 carries the post-translational modification Phosphothreonine; by PKB/AKT1, CDK1 and CDK2. Threonine 197 carries the post-translational modification Phosphothreonine; by CaMK1, PKB/AKT1, RPS6KA1, RPS6KA3 and PIM1.

It belongs to the CDI family. Forms a ternary complex composed of CCNE1, CDK2 and CDKN1B. Interacts directly with CCNE1; the interaction is inhibited by CDK2-dependent phosphorylation on Thr-187. Interacts with COPS5, subunit of the COP9 signalosome complex; the interaction leads to CDKN1B degradation. Interacts with NUP50; the interaction leads to nuclear import and degradation of phosphorylated CDKN1B. Interacts with CCND1 and SNX6. Interacts (Thr-197-phosphorylated form) with 14-3-3 proteins, binds strongly YWHAQ, weakly YWHAE and YWHAH, but not YWHAB nor YWHAZ; the interaction with YWHAQ results in translocation to the cytoplasm. Interacts with AKT1 and LYN; the interactions lead to cytoplasmic mislocation, phosphorylation of CDKN1B and inhibition of cell cycle arrest. Forms a ternary complex with CCNA2 and CDK2; CDKN1B inhibits the kinase activity of CDK2 through conformational rearrangements. Interacts (unphosphorylated form) with CDK2. Forms a complex with CDK2 and SPDYA, but does not directly interact with SPDYA. Forms a ternary complex composed of cyclin D, CDK4 and CDKN1B. Interacts (phosphorylated on Tyr-88 and Tyr-89) with CDK4; the interaction is required for cyclin D and CDK4 complex assembly, induces nuclear translocation and activates the CDK4 kinase activity. Interacts with GRB2. Interacts with PIM1. Identified in a complex with SKP1, SKP2 and CKS1B. Interacts with UHMK1; the interaction leads to cytoplasmic mislocation, phosphorylation of CDKN1B and inhibition of cell cycle arrest. Also interacts with CDK1. Dephosphorylated on Thr-187 by PPM1H, leading to CDKN1B stability. Post-translationally, phosphorylated; phosphorylation occurs on serine, threonine and tyrosine residues. Phosphorylation on Ser-10 is the major site of phosphorylation in resting cells, takes place at the G(0)-G(1) phase and leads to protein stability. Phosphorylation on other sites is greatly enhanced by mitogens, growth factors, MYC and in certain cancer cell lines. The phosphorylated form found in the cytoplasm is inactivate. Phosphorylation on Thr-197 is required for interaction with 14-3-3 proteins. Phosphorylation on Thr-187, by CDK1 and CDK2 leads to protein ubiquitination and proteasomal degradation. Tyrosine phosphorylation promotes this process. Phosphorylation by PKB/AKT1 can be suppressed by LY294002, an inhibitor of the catalytic subunit of PI3K. Phosphorylation on Tyr-88 and Tyr-89 has no effect on binding CDK2, but is required for binding CDK4. Dephosphorylated on tyrosine residues by G-CSF. Dephosphorylated on Thr-187 by PPM1H, leading to CDKN1B stability. Ubiquitinated; in the cytoplasm by the KPC complex (composed of RNF123/KPC1 and UBAC1/KPC2) and, in the nucleus, by SCF(SKP2). The latter requires prior phosphorylation on Thr-187. Ubiquitinated; by a TRIM21-containing SCF(SKP2)-like complex; leads to its degradation. In terms of processing, subject to degradation in the lysosome. Interaction with SNX6 promotes lysosomal degradation.

Its subcellular location is the nucleus. The protein localises to the cytoplasm. It is found in the endosome. Its function is as follows. Important regulator of cell cycle progression. Inhibits the kinase activity of CDK2 bound to cyclin A, but has little inhibitory activity on CDK2 bound to SPDYA. Involved in G1 arrest. Potent inhibitor of cyclin E- and cyclin A-CDK2 complexes. Forms a complex with cyclin type D-CDK4 complexes and is involved in the assembly, stability, and modulation of CCND1-CDK4 complex activation. Acts either as an inhibitor or an activator of cyclin type D-CDK4 complexes depending on its phosphorylation state and/or stoichometry. The protein is Cyclin-dependent kinase inhibitor 1B (Cdkn1b) of Mus musculus (Mouse).